The following is a 374-amino-acid chain: Ribosomal RNA large subunit methyltransferase G (374 aa).

The protein belongs to the methyltransferase superfamily. RlmG family.

The protein resides in the cytoplasm. The catalysed reaction is guanosine(1835) in 23S rRNA + S-adenosyl-L-methionine = N(2)-methylguanosine(1835) in 23S rRNA + S-adenosyl-L-homocysteine + H(+). Functionally, specifically methylates the guanine in position 1835 (m2G1835) of 23S rRNA. The sequence is that of Ribosomal RNA large subunit methyltransferase G from Pseudomonas putida (strain ATCC 700007 / DSM 6899 / JCM 31910 / BCRC 17059 / LMG 24140 / F1).